The following is a 101-amino-acid chain: Protein RALF-like 14 (101 aa).

Residues 1–21 (MKLLIFAVIISVVLFPVLVSS) form the signal peptide. A propeptide spans 22–56 (RTIKCDQLSGKCINGEEKEIMNMRLGLDVSSRRIL) (removed in mature form). A disulfide bridge links Cys90 with Cys96.

It belongs to the plant rapid alkalinization factor (RALF) family. In terms of processing, proteolytically cleaved, probably by S1P, a subtilisin-like serine protease (subtilase).

The protein resides in the secreted. Cell signaling peptide that may regulate plant stress, growth, and development. Mediates a rapid alkalinization of extracellular space by mediating a transient increase in the cytoplasmic Ca(2+) concentration leading to a calcium-dependent signaling events through a cell surface receptor and a concomitant activation of some intracellular mitogen-activated protein kinases. The protein is Protein RALF-like 14 (RALFL14) of Arabidopsis thaliana (Mouse-ear cress).